The following is a 580-amino-acid chain: Mucolipin-1 (580 aa).

Positions 1-38 are disordered; that stretch reads MATPAGRRASETERLLTPNPGYGTQVGTSPAPTTPTEE. Residues 1–65 lie on the Cytoplasmic side of the membrane; that stretch reads MATPAGRRAS…FRAKGRKPCK (65 aa). At Ser-10 the chain carries Phosphoserine. The short motif at 11 to 16 is the Dileucine motif; mediates targeting to lysosomes element; that stretch reads ETERLL. The interval 42-62 is interaction with phosphoinositides; sequence RRRLKYFFMSPCDKFRAKGRK. Residues 66–86 traverse the membrane as a helical segment; that stretch reads LMLQVVKILVVTVQLILFGLS. The Extracellular portion of the chain corresponds to 87–298; the sequence is NQLVVTFREE…VSRHGDNSFR (212 aa). An extracellular/lumenal pore loop region spans residues 107–121; that stretch reads LGYSDGSDDTFAAYT. The cysteines at positions 166 and 192 are disulfide-linked. Asn-220 and Asn-230 each carry an N-linked (GlcNAc...) asparagine glycan. Cys-253 and Cys-284 are oxidised to a cystine. The helical transmembrane segment at 299 to 321 threads the bilayer; sequence LLFDVVVILTCSLSFLLCARSLL. Over 322 to 350 the chain is Cytoplasmic; that stretch reads RGFLLQNEFVVFMWRRRGREISLWERLEF. Residues 351–371 traverse the membrane as a helical segment; the sequence is VNGWYILLVTSDVLTISGTVM. Residues 372–382 lie on the Extracellular side of the membrane; it reads KIGIEAKNLAS. The helical transmembrane segment at 383–405 threads the bilayer; it reads YDVCSILLGTSTLLVWVGVIRYL. Residues 406–427 are Cytoplasmic-facing; that stretch reads TFFHKYNILIATLRVALPSVMR. Residues 428–448 traverse the membrane as a helical segment; that stretch reads FCCCVAVIYLGYCFCGWIVLG. Over 449 to 456 the chain is Extracellular; the sequence is PYHVKFRS. An intramembrane region (pore-forming) is located at residues 457–477; that stretch reads LSMVSECLFSLINGDDMFVTF. Positions 469 to 474 match the Selectivity filter motif; the sequence is NGDDMF. Residues 478–491 are Extracellular-facing; sequence AAMQAQQGHSSLVW. A helical transmembrane segment spans residues 492-513; the sequence is LFSQLYLYSFISLFIYMVLSLF. The Cytoplasmic segment spans residues 514–580; sequence IALITGAYDT…SPEDHSLLVN (67 aa). At Ser-557 the chain carries Phosphoserine. Ser-559 bears the Phosphoserine; by PAK mark. A required for palmitoylation and association with membranes region spans residues 565–567; it reads CCC. A Dileucine internalization motif; mediates AP2 complex-dependent internalization motif is present at residues 573–578; it reads EDHSLL.

It belongs to the transient receptor (TC 1.A.4) family. Polycystin subfamily. MCOLN1 sub-subfamily. As to quaternary structure, homotetramer. Homooligomer. Can heterooligomerize with MCOLN2 or MCOLN3; heteromeric assemblies have different channel properties as compared to the respective homooligomers and may be tissue-specific. Interacts with PDCD6. Interacts with TMEM163. Interacts with LAPTM4B. Post-translationally, palmitoylated; involved in association with membranes. In terms of processing, phosphorylation by PKA inhibits channel activity. Dephosphorylation increases activity. Proteolytically cleaved probably involving multiple lysosomal proteases including cathepsin B; inhibits lysosomal channel activity. Widely expressed, with the highest expression in brain, liver and kidney.

The protein resides in the late endosome membrane. Its subcellular location is the lysosome membrane. It is found in the cytoplasmic vesicle membrane. It localises to the cell projection. The protein localises to the phagocytic cup. The protein resides in the cytoplasmic vesicle. Its subcellular location is the phagosome membrane. It is found in the cell membrane. It catalyses the reaction Ca(2+)(in) = Ca(2+)(out). It carries out the reaction Fe(2+)(in) = Fe(2+)(out). The enzyme catalyses Mg(2+)(in) = Mg(2+)(out). The catalysed reaction is K(+)(in) = K(+)(out). It catalyses the reaction Na(+)(in) = Na(+)(out). Channel activity is controlled by multiple regulatory mechanisms in different subcellular compartments. Lower pH by itself has an inhibitory effect on channel conductance. Channel function is transiently modulated by changes in Ca(2+) in a pH-dependent manner; pH changes modify the aggregation state of unitary channels; a negative cooperativity between extracellular/lumenal Ca(2+) and H(+) is suggested. Fe(2+) channel activity is potentiated by low pH. Regulated by phosphoinositides in a compartment-specific manner: in lysosomes activated by PtdIns(3,5)P2 (Phosphatidylinositol 3,5-bisphosphate) and at the plasma membrane inhibited by PtdIns(4,5)P2 (Phosphatidylinositol 4,5-bisphosphate). Nonselective cation channel probably playing a role in the regulation of membrane trafficking events and of metal homeostasis. Acts as a Ca(2+)-permeable cation channel with inwardly rectifying activity. Proposed to play a major role in Ca(2+) release from late endosome and lysosome vesicles to the cytoplasm, which is important for many lysosome-dependent cellular events, including the fusion and trafficking of these organelles, exocytosis and autophagy. Required for efficient uptake of large particles in macrophages in which Ca(2+) release from the lysosomes triggers lysosomal exocytosis. May also play a role in phagosome-lysosome fusion. Involved in lactosylceramide trafficking indicative for a role in the regulation of late endocytic membrane fusion/fission events. By mediating lysosomal Ca(2+) release is involved in regulation of mTORC1 signaling and in mTOR/TFEB-dependent lysosomal adaptation to environmental cues such as nutrient levels. Seems to act as lysosomal active oxygen species (ROS) sensor involved in ROS-induced TFEB activation and autophagy. Also functions as a Fe(2+) permeable channel in late endosomes and lysosomes. Also permeable to Mg(2+), Na(+). K(+) and Cs(+). Proposed to play a role in zinc homeostasis probably implicating its association with TMEM163. In adaptive immunity, TRPML2 and TRPML1 may play redundant roles in the function of the specialized lysosomes of B cells. Its function is as follows. May contribute to cellular lipase activity within the late endosomal pathway or at the cell surface which may be involved in processes of membrane reshaping and vesiculation, especially the growth of tubular structures. However, it is not known, whether it conveys the enzymatic activity directly, or merely facilitates the activity of an associated phospholipase. The sequence is that of Mucolipin-1 from Mus musculus (Mouse).